We begin with the raw amino-acid sequence, 327 residues long: uncharacterized protein (327 aa).

This is an uncharacterized protein from Lepidoptera (butterflies and moths).